Consider the following 573-residue polypeptide: Proline--tRNA ligase (573 aa).

The protein belongs to the class-II aminoacyl-tRNA synthetase family. ProS type 1 subfamily. Homodimer.

It is found in the cytoplasm. The enzyme catalyses tRNA(Pro) + L-proline + ATP = L-prolyl-tRNA(Pro) + AMP + diphosphate. Its function is as follows. Catalyzes the attachment of proline to tRNA(Pro) in a two-step reaction: proline is first activated by ATP to form Pro-AMP and then transferred to the acceptor end of tRNA(Pro). As ProRS can inadvertently accommodate and process non-cognate amino acids such as alanine and cysteine, to avoid such errors it has two additional distinct editing activities against alanine. One activity is designated as 'pretransfer' editing and involves the tRNA(Pro)-independent hydrolysis of activated Ala-AMP. The other activity is designated 'posttransfer' editing and involves deacylation of mischarged Ala-tRNA(Pro). The misacylated Cys-tRNA(Pro) is not edited by ProRS. This Caldanaerobacter subterraneus subsp. tengcongensis (strain DSM 15242 / JCM 11007 / NBRC 100824 / MB4) (Thermoanaerobacter tengcongensis) protein is Proline--tRNA ligase.